Consider the following 226-residue polypeptide: Fibronectin type III domain-containing protein 9 (226 aa).

A Fibronectin type-III domain is found at 1-101; it reads MNIEVGNVSH…FHTLDKSPLA (101 aa). A helical transmembrane segment spans residues 113–133; it reads LWVLMAILLACFTAVLAFICL.

The protein resides in the membrane. This is Fibronectin type III domain-containing protein 9 (Fndc9) from Mus musculus (Mouse).